A 154-amino-acid polypeptide reads, in one-letter code: Interleukin-2 (154 aa).

An N-terminal signal peptide occupies residues 1 to 20; the sequence is MYKLQFLSCIALTLALVANS. Residue Thr23 is glycosylated (O-linked (GalNAc...) threonine). Cysteines 78 and 126 form a disulfide. Residue Asn111 is glycosylated (N-linked (GlcNAc...) asparagine).

This sequence belongs to the IL-2 family.

The protein localises to the secreted. Functionally, cytokine produced by activated CD4-positive helper T-cells and to a lesser extend activated CD8-positive T-cells and natural killer (NK) cells that plays pivotal roles in the immune response and tolerance. Binds to a receptor complex composed of either the high-affinity trimeric IL-2R (IL2RA/CD25, IL2RB/CD122 and IL2RG/CD132) or the low-affinity dimeric IL-2R (IL2RB and IL2RG). Interaction with the receptor leads to oligomerization and conformation changes in the IL-2R subunits resulting in downstream signaling starting with phosphorylation of JAK1 and JAK3. In turn, JAK1 and JAK3 phosphorylate the receptor to form a docking site leading to the phosphorylation of several substrates including STAT5. This process leads to activation of several pathways including STAT, phosphoinositide-3-kinase/PI3K and mitogen-activated protein kinase/MAPK pathways. Functions as a T-cell growth factor and can increase NK-cell cytolytic activity as well. Promotes strong proliferation of activated B-cells and subsequently immunoglobulin production. Plays a pivotal role in regulating the adaptive immune system by controlling the survival and proliferation of regulatory T-cells, which are required for the maintenance of immune tolerance. Moreover, participates in the differentiation and homeostasis of effector T-cell subsets, including Th1, Th2, Th17 as well as memory CD8-positive T-cells. In Camelus bactrianus (Bactrian camel), this protein is Interleukin-2 (IL2).